Consider the following 162-residue polypeptide: Caveolin-2 (162 aa).

The Cytoplasmic portion of the chain corresponds to 1–86 (MGLETEKADV…FEISKYVLYK (86 aa)). Phosphotyrosine; by SRC is present on Tyr-19. Residues Ser-20 and Ser-23 each carry the phosphoserine modification. Positions 87-107 (FLTVFLAIPLAFAAGVLFAVL) form an intramembrane region, helical. At 108–162 (SCLHIWILMPFVKTCLMVLPSVQTIWRSVTDVVIAPLCASIGRSFSSVGLQLSHD) the chain is on the cytoplasmic side.

It belongs to the caveolin family. Monomer or homodimer. Interacts with CAV1; the interaction forms a stable heterooligomeric complex that is required for targeting to lipid rafts and for caveolae formation. Tyrosine phosphorylated forms do not form heterooligomers with the Tyr-19-phosphorylated form existing as a monomer or dimer. Interacts (tyrosine phosphorylated form) with the SH2 domain-containing proteins, RASA1, NCK1 and SRC. Interacts (tyrosine phosphorylated form) with INSR. Interacts (Tyr-19 phosphorylated form) with MAPK1 (phosphorylated form); the interaction, promoted by insulin, leads to nuclear location and MAPK1 activation. Interacts with STAT3; the interaction is increased on insulin-induced tyrosine phosphorylation leading to STAT activation. Post-translationally, phosphorylated on serine and tyrosine residues. CAV1 promotes phosphorylation on Ser-23 which then targets the complex to the plasma membrane, lipid rafts and caveolae. Phosphorylation on Tyr-19 is required for insulin-induced phosphorylation of MAPK1 and DNA binding of STAT3. Tyrosine phosphorylation is induced by both EGF and insulin.

It localises to the nucleus. The protein resides in the cytoplasm. The protein localises to the golgi apparatus membrane. It is found in the cell membrane. Its subcellular location is the membrane. It localises to the caveola. May act as a scaffolding protein within caveolar membranes. Interacts directly with G-protein alpha subunits and can functionally regulate their activity. Acts as an accessory protein in conjunction with CAV1 in targeting to lipid rafts and driving caveolae formation. Positive regulator of cellular mitogenesis of the MAPK signaling pathway. Required for the insulin-stimulated nuclear translocation and activation of MAPK1 and STAT3, and the subsequent regulation of cell cycle progression. This is Caveolin-2 (CAV2) from Oryctolagus cuniculus (Rabbit).